Reading from the N-terminus, the 85-residue chain is Teretoxin Tan9.6 (85 aa).

The N-terminal stretch at 1–21 (MMSKTGALLLTFMILVLFSMA) is a signal peptide. A propeptide spanning residues 22 to 52 (AADALGERFEDHEQKIREQDAGVGLLSLMGR) is cleaved from the precursor.

Contains 3 disulfide bonds. Expressed by the venom duct.

It localises to the secreted. The protein is Teretoxin Tan9.6 of Terebra anilis (Auger snail).